Reading from the N-terminus, the 314-residue chain is Glyceraldehyde-3-phosphate dehydrogenase A, chloroplastic (314 aa).

NADP(+) contacts are provided by residues 5–6 (RI), Asp-29, and Arg-74. Cys-13 and Cys-283 are joined by a disulfide. D-glyceraldehyde 3-phosphate is bound by residues 147–149 (SCT), Thr-178, Arg-193, 206–207 (TG), and Arg-229. The Nucleophile role is filled by Cys-148. Position 311 (Asn-311) interacts with NADP(+).

This sequence belongs to the glyceraldehyde-3-phosphate dehydrogenase family. As to quaternary structure, homotetramer.

The protein resides in the plastid. It is found in the chloroplast. The enzyme catalyses D-glyceraldehyde 3-phosphate + phosphate + NADP(+) = (2R)-3-phospho-glyceroyl phosphate + NADPH + H(+). It participates in carbohydrate biosynthesis; Calvin cycle. In Scenedesmus vacuolatus (Green alga), this protein is Glyceraldehyde-3-phosphate dehydrogenase A, chloroplastic (GapA).